The sequence spans 185 residues: Elongation factor P (185 aa).

Belongs to the elongation factor P family.

It localises to the cytoplasm. It participates in protein biosynthesis; polypeptide chain elongation. Involved in peptide bond synthesis. Stimulates efficient translation and peptide-bond synthesis on native or reconstituted 70S ribosomes in vitro. Probably functions indirectly by altering the affinity of the ribosome for aminoacyl-tRNA, thus increasing their reactivity as acceptors for peptidyl transferase. The sequence is that of Elongation factor P from Salinispora tropica (strain ATCC BAA-916 / DSM 44818 / JCM 13857 / NBRC 105044 / CNB-440).